The chain runs to 334 residues: Aspartate carbamoyltransferase catalytic subunit (334 aa).

R70 and T71 together coordinate carbamoyl phosphate. K98 is an L-aspartate binding site. Residues R120, H150, and Q153 each coordinate carbamoyl phosphate. 2 residues coordinate L-aspartate: R183 and R239. Carbamoyl phosphate-binding residues include G280 and P281.

It belongs to the aspartate/ornithine carbamoyltransferase superfamily. ATCase family. In terms of assembly, heterododecamer (2C3:3R2) of six catalytic PyrB chains organized as two trimers (C3), and six regulatory PyrI chains organized as three dimers (R2).

It catalyses the reaction carbamoyl phosphate + L-aspartate = N-carbamoyl-L-aspartate + phosphate + H(+). Its pathway is pyrimidine metabolism; UMP biosynthesis via de novo pathway; (S)-dihydroorotate from bicarbonate: step 2/3. Its function is as follows. Catalyzes the condensation of carbamoyl phosphate and aspartate to form carbamoyl aspartate and inorganic phosphate, the committed step in the de novo pyrimidine nucleotide biosynthesis pathway. This chain is Aspartate carbamoyltransferase catalytic subunit, found in Pseudomonas paraeruginosa (strain DSM 24068 / PA7) (Pseudomonas aeruginosa (strain PA7)).